We begin with the raw amino-acid sequence, 428 residues long: Peptidase B (428 aa).

Residues K195 and D200 each coordinate Mn(2+). K207 is an active-site residue. Mn(2+) contacts are provided by D218, D277, and E279. Residue R281 is part of the active site.

Belongs to the peptidase M17 family. In terms of assembly, homohexamer. It depends on Mn(2+) as a cofactor.

Its subcellular location is the cytoplasm. The enzyme catalyses Release of an N-terminal amino acid, Xaa, from a peptide or arylamide. Xaa is preferably Glu or Asp but may be other amino acids, including Leu, Met, His, Cys and Gln.. Its function is as follows. Probably plays an important role in intracellular peptide degradation. This is Peptidase B from Enterobacter sp. (strain 638).